A 501-amino-acid chain; its full sequence is Mitogen-activated protein kinase MKC1 (501 aa).

Positions 28–339 (FKIVKELGHG…VRDALNHKYL (312 aa)) constitute a Protein kinase domain. ATP contacts are provided by residues 34 to 42 (LGHGAYGIV) and Lys-74. The Proton acceptor role is filled by Asp-174. Thr-211 is subject to Phosphothreonine. The TXY signature appears at 211-213 (TEY). Position 213 is a phosphotyrosine (Tyr-213). A disordered region spans residues 400–450 (MQKREEQRQEEEEKELLEQQRQFPAQESMDISQTPYNNLETNIGTPQVEDD). Over residues 422 to 444 (FPAQESMDISQTPYNNLETNIGT) the composition is skewed to polar residues.

The protein belongs to the protein kinase superfamily. CMGC Ser/Thr protein kinase family. MAP kinase subfamily. Requires Mg(2+) as cofactor. Post-translationally, dually phosphorylated on Thr-211 and Tyr-213, which activates the enzyme.

It carries out the reaction L-seryl-[protein] + ATP = O-phospho-L-seryl-[protein] + ADP + H(+). The enzyme catalyses L-threonyl-[protein] + ATP = O-phospho-L-threonyl-[protein] + ADP + H(+). Activated by tyrosine and threonine phosphorylation. This Candida albicans (Yeast) protein is Mitogen-activated protein kinase MKC1 (MKC1).